The chain runs to 417 residues: Serine hydroxymethyltransferase (417 aa).

Residues L120 and 124 to 126 (GHL) contribute to the (6S)-5,6,7,8-tetrahydrofolate site. K229 carries the post-translational modification N6-(pyridoxal phosphate)lysine.

This sequence belongs to the SHMT family. Homodimer. The cofactor is pyridoxal 5'-phosphate.

It localises to the cytoplasm. It carries out the reaction (6R)-5,10-methylene-5,6,7,8-tetrahydrofolate + glycine + H2O = (6S)-5,6,7,8-tetrahydrofolate + L-serine. Its pathway is one-carbon metabolism; tetrahydrofolate interconversion. It functions in the pathway amino-acid biosynthesis; glycine biosynthesis; glycine from L-serine: step 1/1. Functionally, catalyzes the reversible interconversion of serine and glycine with tetrahydrofolate (THF) serving as the one-carbon carrier. This reaction serves as the major source of one-carbon groups required for the biosynthesis of purines, thymidylate, methionine, and other important biomolecules. Also exhibits THF-independent aldolase activity toward beta-hydroxyamino acids, producing glycine and aldehydes, via a retro-aldol mechanism. The protein is Serine hydroxymethyltransferase of Anaeromyxobacter dehalogenans (strain 2CP-C).